The chain runs to 304 residues: Acetyl-coenzyme A carboxylase carboxyl transferase subunit beta (304 aa).

The CoA carboxyltransferase N-terminal domain occupies 23–292 (VWTKCDSCGQ…PNPDAPREGV (270 aa)). Zn(2+)-binding residues include cysteine 27, cysteine 30, cysteine 46, and cysteine 49. The C4-type zinc-finger motif lies at 27–49 (CDSCGQVLYRAELERNLEVCPKC). The tract at residues 284–304 (NPDAPREGVVVPPAPDQESEV) is disordered.

The protein belongs to the AccD/PCCB family. In terms of assembly, acetyl-CoA carboxylase is a heterohexamer composed of biotin carboxyl carrier protein (AccB), biotin carboxylase (AccC) and two subunits each of ACCase subunit alpha (AccA) and ACCase subunit beta (AccD). Requires Zn(2+) as cofactor.

The protein localises to the cytoplasm. It catalyses the reaction N(6)-carboxybiotinyl-L-lysyl-[protein] + acetyl-CoA = N(6)-biotinyl-L-lysyl-[protein] + malonyl-CoA. Its pathway is lipid metabolism; malonyl-CoA biosynthesis; malonyl-CoA from acetyl-CoA: step 1/1. Its function is as follows. Component of the acetyl coenzyme A carboxylase (ACC) complex. Biotin carboxylase (BC) catalyzes the carboxylation of biotin on its carrier protein (BCCP) and then the CO(2) group is transferred by the transcarboxylase to acetyl-CoA to form malonyl-CoA. In Salmonella paratyphi A (strain ATCC 9150 / SARB42), this protein is Acetyl-coenzyme A carboxylase carboxyl transferase subunit beta.